The following is a 512-amino-acid chain: MIKDMIDSIEQFAQTQADFPVYDCLGEHRTYGQLKRDSDSIAAFIDSLALLAKSPVLVFGAQTYDMLATFVALTKSGHAYIPVDVHSAPERILAIIEIAKPSLIIAIEEFPLTIEGISLVSLSEIESAKLAEMPYERTHSVKGDDNYYIIFTSGTTGQPKGVQISHDNLLSFTNWMIEDAAFDVPKQPQMLAQPPYSFDLSVMYWAPTLALGGTLFALPKELVADFKQLFTTIAQLPVGIWTSTPSFADMAMLSDDFCQAKMPALTHFYFDGEELTVSTARKLFERFPSAKIINAYGPTEATVALSAIEITREMVDNYTRLPIGYPKPDSPTYIIDEDGKELASGEQGEIIVTGPAVSKGYLNNPEKTAEAFFTFKGQPAYHTGDIGSLTEDNILLYGGRLDFQIKYAGYRIELEDVSQQLNQSPMVASAVAVPRYNKEHKVQNLLAYIVVKDGVKERFDRELELTKAIKASVKDHMMSYMMPSKFLYRDSLPLTPNGKIDIKTLINEVNNR.

Residue 152–153 participates in ATP binding; it reads TS. Asp-199 serves as a coordination point for D-alanine. 294 to 299 contributes to the ATP binding site; sequence NAYGPT. D-alanine is bound at residue Val-303. Residues Asp-385, 397-400, and Lys-499 each bind ATP; that span reads YGGR. Lys-499 contributes to the D-alanine binding site.

The protein belongs to the ATP-dependent AMP-binding enzyme family. DltA subfamily.

It is found in the cytoplasm. The catalysed reaction is holo-[D-alanyl-carrier protein] + D-alanine + ATP = D-alanyl-[D-alanyl-carrier protein] + AMP + diphosphate. It participates in cell wall biogenesis; lipoteichoic acid biosynthesis. In terms of biological role, catalyzes the first step in the D-alanylation of lipoteichoic acid (LTA), the activation of D-alanine and its transfer onto the D-alanyl carrier protein (Dcp) DltC. In an ATP-dependent two-step reaction, forms a high energy D-alanyl-AMP intermediate, followed by transfer of the D-alanyl residue as a thiol ester to the phosphopantheinyl prosthetic group of the Dcp. D-alanylation of LTA plays an important role in modulating the properties of the cell wall in Gram-positive bacteria, influencing the net charge of the cell wall. In Streptococcus pyogenes serotype M28 (strain MGAS6180), this protein is D-alanine--D-alanyl carrier protein ligase.